Consider the following 81-residue polypeptide: Cytochrome c oxidase subunit 7B2, mitochondrial (81 aa).

A mitochondrion-targeting transit peptide spans 1 to 25; it reads MMFPLARNALSSLKIQSILQSMARH. At 26-33 the chain is on the mitochondrial matrix side; the sequence is SHVKHSPD. A helical transmembrane segment spans residues 34 to 60; the sequence is FHDKYGNAVLASGTAFCVATWVFTATQ. Residues 61–81 lie on the Mitochondrial intermembrane side of the membrane; that stretch reads IGIEWNLSPVGRVTPKEWKHQ.

Belongs to the cytochrome c oxidase VIIb family. As to quaternary structure, component of the cytochrome c oxidase (complex IV, CIV), a multisubunit enzyme composed of 14 subunits. The complex is composed of a catalytic core of 3 subunits MT-CO1, MT-CO2 and MT-CO3, encoded in the mitochondrial DNA, and 11 supernumerary subunits COX4I, COX5A, COX5B, COX6A, COX6B, COX6C, COX7A, COX7B, COX7C, COX8 and NDUFA4, which are encoded in the nuclear genome. The complex exists as a monomer or a dimer and forms supercomplexes (SCs) in the inner mitochondrial membrane with NADH-ubiquinone oxidoreductase (complex I, CI) and ubiquinol-cytochrome c oxidoreductase (cytochrome b-c1 complex, complex III, CIII), resulting in different assemblies (supercomplex SCI(1)III(2)IV(1) and megacomplex MCI(2)III(2)IV(2)).

It is found in the mitochondrion inner membrane. Its pathway is energy metabolism; oxidative phosphorylation. Its function is as follows. Component of the cytochrome c oxidase, the last enzyme in the mitochondrial electron transport chain which drives oxidative phosphorylation. The respiratory chain contains 3 multisubunit complexes succinate dehydrogenase (complex II, CII), ubiquinol-cytochrome c oxidoreductase (cytochrome b-c1 complex, complex III, CIII) and cytochrome c oxidase (complex IV, CIV), that cooperate to transfer electrons derived from NADH and succinate to molecular oxygen, creating an electrochemical gradient over the inner membrane that drives transmembrane transport and the ATP synthase. Cytochrome c oxidase is the component of the respiratory chain that catalyzes the reduction of oxygen to water. Electrons originating from reduced cytochrome c in the intermembrane space (IMS) are transferred via the dinuclear copper A center (CU(A)) of subunit 2 and heme A of subunit 1 to the active site in subunit 1, a binuclear center (BNC) formed by heme A3 and copper B (CU(B)). The BNC reduces molecular oxygen to 2 water molecules using 4 electrons from cytochrome c in the IMS and 4 protons from the mitochondrial matrix. This Homo sapiens (Human) protein is Cytochrome c oxidase subunit 7B2, mitochondrial (COX7B2).